The sequence spans 511 residues: Myrosinase 5 (511 aa).

An N-terminal signal peptide occupies residues 1–23 (MAIPKAHYSLAVLVLLFVVVSSS). Intrachain disulfides connect C31-C450, C39-C445, and C230-C233. N-linked (GlcNAc...) asparagine glycans are attached at residues N46 and N53. A beta-D-glucoside contacts are provided by residues Q64, H165, and 210–211 (NQ). N222 is a glycosylation site (N-linked (GlcNAc...) asparagine). A beta-D-glucoside-binding residues include Y351 and E418. Residue E418 is the Nucleophile of the active site. N-linked (GlcNAc...) asparagine glycosylation occurs at N428. A beta-D-glucoside is bound by residues W467, 474 to 475 (EF), and F483. N489 is a glycosylation site (N-linked (GlcNAc...) asparagine).

This sequence belongs to the glycosyl hydrolase 1 family. In terms of tissue distribution, specifically expressed in roots.

The enzyme catalyses a thioglucoside + H2O = a sugar + a thiol.. It carries out the reaction Hydrolysis of terminal, non-reducing beta-D-glucosyl residues with release of beta-D-glucose.. In terms of biological role, hydrolyzes sinigrin and, with lower efficiency, p-nitrophenyl beta-D-glucoside. The sequence is that of Myrosinase 5 from Arabidopsis thaliana (Mouse-ear cress).